The chain runs to 511 residues: Maturase K (511 aa).

It belongs to the intron maturase 2 family. MatK subfamily.

The protein resides in the plastid. Its subcellular location is the chloroplast. Functionally, usually encoded in the trnK tRNA gene intron. Probably assists in splicing its own and other chloroplast group II introns. This chain is Maturase K, found in Bromus inermis (Smooth brome grass).